Consider the following 72-residue polypeptide: Mu-like prophage FluMu protein C (72 aa).

Residues 35 to 55 (NVPDLIKKYRLSESTIYAILR) constitute a DNA-binding region (H-T-H motif).

Belongs to the c/mor transcriptional regulatory family.

Functionally, required for transcription of the phage late genes. This Haemophilus influenzae (strain ATCC 51907 / DSM 11121 / KW20 / Rd) protein is Mu-like prophage FluMu protein C.